A 318-amino-acid chain; its full sequence is Gamma-glutamyl hydrolase (318 aa).

A signal peptide spans 1-24 (MASPGCLLCVLGLLLCGAASLELS). Residues 25–318 (RPHGDTAKKP…SSFQQCYIFD (294 aa)) enclose the Gamma-glutamyl hydrolase domain. Asparagine 116 is a glycosylation site (N-linked (GlcNAc...) asparagine). The active-site Nucleophile is cysteine 134. N-linked (GlcNAc...) asparagine glycosylation is found at asparagine 163 and asparagine 203. Histidine 244 (proton donor) is an active-site residue. Asparagine 307 is a glycosylation site (N-linked (GlcNAc...) asparagine; partial).

This sequence belongs to the peptidase C26 family. In terms of assembly, homodimer.

It is found in the secreted. The protein localises to the extracellular space. Its subcellular location is the lysosome. The protein resides in the melanosome. The enzyme catalyses (6S)-5,6,7,8-tetrahydrofolyl-(gamma-L-Glu)(n) + (n-1) H2O = (6S)-5,6,7,8-tetrahydrofolate + (n-1) L-glutamate. In terms of biological role, hydrolyzes the polyglutamate sidechains of pteroylpolyglutamates. Progressively removes gamma-glutamyl residues from pteroylpoly-gamma-glutamate to yield pteroyl-alpha-glutamate (folic acid) and free glutamate. May play an important role in the bioavailability of dietary pteroylpolyglutamates and in the metabolism of pteroylpolyglutamates and antifolates. This Homo sapiens (Human) protein is Gamma-glutamyl hydrolase.